A 408-amino-acid polypeptide reads, in one-letter code: Phosphoglycerate kinase (408 aa).

Substrate-binding positions include 24-26 (DLN), R39, 62-65 (HLGR), R121, and R161. ATP contacts are provided by residues K211, G307, E338, and 364–367 (GGDS).

Belongs to the phosphoglycerate kinase family. As to quaternary structure, monomer.

It is found in the cytoplasm. It carries out the reaction (2R)-3-phosphoglycerate + ATP = (2R)-3-phospho-glyceroyl phosphate + ADP. Its pathway is carbohydrate degradation; glycolysis; pyruvate from D-glyceraldehyde 3-phosphate: step 2/5. The polypeptide is Phosphoglycerate kinase (Arthrobacter sp. (strain FB24)).